The chain runs to 79 residues: Sec-independent protein translocase protein TatA (79 aa).

A helical transmembrane segment spans residues 1–21 (MGFSTTHLLIFLVIIIVIFGT). A disordered region spans residues 43–63 (KEGSDKAADAPAAAPQQVASS). Low complexity predominate over residues 51–63 (DAPAAAPQQVASS).

The protein belongs to the TatA/E family. The Tat system comprises two distinct complexes: a TatABC complex, containing multiple copies of TatA, TatB and TatC subunits, and a separate TatA complex, containing only TatA subunits. Substrates initially bind to the TatABC complex, which probably triggers association of the separate TatA complex to form the active translocon.

Its subcellular location is the cell inner membrane. In terms of biological role, part of the twin-arginine translocation (Tat) system that transports large folded proteins containing a characteristic twin-arginine motif in their signal peptide across membranes. TatA could form the protein-conducting channel of the Tat system. This chain is Sec-independent protein translocase protein TatA, found in Albidiferax ferrireducens (strain ATCC BAA-621 / DSM 15236 / T118) (Rhodoferax ferrireducens).